Here is a 1134-residue protein sequence, read N- to C-terminus: DNA damage-binding protein 1 (1134 aa).

This sequence belongs to the DDB1 family. Interacts with cdt-1 and cul-4. Expressed at high levels in the spermatheca of adult hermaphrodites.

It localises to the cytoplasm. The protein localises to the nucleus. It participates in protein modification; protein ubiquitination. Functionally, plays a role in DNA repair. May be a component of an E3 ubiquitin-protein ligase which promotes histone ubiquitination in response to UV irradiation. Histone ubiquitination may be important for subsequent DNA repair. Promotes the degradation of the replication licensing factor cdt-1 during S-phase, thereby preventing rereplication of DNA during a single round of cell division. In Caenorhabditis elegans, this protein is DNA damage-binding protein 1 (ddb-1).